Here is a 731-residue protein sequence, read N- to C-terminus: Replication restart protein PriA (731 aa).

The segment at 1-98 (MSVAHVALPV…HPIGDVLFHA (98 aa)) is 3'BD. Residues 115–177 (WYWFATEQGQ…RGKGLAELAC (63 aa)) are WH. Residues 200–375 (TEQATAVGAI…VRQGKYRQLT (176 aa)) form a helicase lobe 1 region. In terms of domain architecture, Helicase ATP-binding spans 210 to 376 (HSAADRFSAW…RQGKYRQLTL (167 aa)). 223 to 230 (GITGSGKT) serves as a coordination point for ATP. Positions 226, 228, 229, 230, 231, and 263 each coordinate ADP. Positions 319–322 (DEEH) match the DEAH box motif. The Aromatic-rich loop (ARL) motif lies at 326–340 (YKQQEGWRYHARDLA). Positions 387–430 (QQHVLDLKGQPLQAGLSPALISRMRQHLQADNQVILFLNRRGFA) are helicase lobe 2, N-terminus. Positions 431 to 485 (PALLCHDCGWIAECPRCDSYYTLHQAQHHLRCHHCDSQRPIPRQCPSCGSTHLVP) are CRR. The Zn(2+) site is built by Cys435, Cys438, Cys444, Cys447, Cys462, Cys465, Cys475, and Cys478. The Helicase C-terminal domain maps to 470 to 637 (PIPRQCPSCG…QLPPWTSHVL (168 aa)). The segment at 486–626 (VGIGTEQLEQ…AEQALAERQT (141 aa)) is helicase lobe 2, C-terminus. An ADP-binding site is contributed by Lys543. The segment at 633-731 (TSHVLIRAED…WVLDVDPIEG (99 aa)) is CTD.

Belongs to the helicase family. PriA subfamily. As to quaternary structure, binds SSB. Component of the replication restart primosome. Zn(2+) serves as cofactor.

It carries out the reaction Couples ATP hydrolysis with the unwinding of duplex DNA by translocating in the 3'-5' direction.. The enzyme catalyses ATP + H2O = ADP + phosphate + H(+). Its activity is regulated as follows. ATPase activity is stimulated by single-stranded binding protein (SSB). Initiates the restart of stalled replication forks, which reloads the replicative helicase on sites other than the origin of replication. Recognizes and binds to abandoned replication forks and remodels them to uncover a helicase loading site. Promotes assembly of the primosome at these replication forks. Its function is as follows. Recognizes abandoned replication forks and remodels SSB on ssDNA to uncover a loading site for DnaB. Binds replication fork DNA, has DNA-dependent ATPase activity in the presence of replication fork DNA, restores normal cell growth and SOS induction to E.coli mutant pirA304. This is Replication restart protein PriA from Klebsiella pneumoniae subsp. pneumoniae (strain ATCC 700721 / MGH 78578).